We begin with the raw amino-acid sequence, 117 residues long: Large ribosomal subunit protein bL20 (117 aa).

It belongs to the bacterial ribosomal protein bL20 family.

Binds directly to 23S ribosomal RNA and is necessary for the in vitro assembly process of the 50S ribosomal subunit. It is not involved in the protein synthesizing functions of that subunit. The protein is Large ribosomal subunit protein bL20 of Neorickettsia sennetsu (strain ATCC VR-367 / Miyayama) (Ehrlichia sennetsu).